The following is a 129-amino-acid chain: Small ribosomal subunit protein uS11 (129 aa).

The protein belongs to the universal ribosomal protein uS11 family. As to quaternary structure, part of the 30S ribosomal subunit. Interacts with proteins S7 and S18. Binds to IF-3.

Located on the platform of the 30S subunit, it bridges several disparate RNA helices of the 16S rRNA. Forms part of the Shine-Dalgarno cleft in the 70S ribosome. This Vibrio atlanticus (strain LGP32) (Vibrio splendidus (strain Mel32)) protein is Small ribosomal subunit protein uS11.